Here is a 373-residue protein sequence, read N- to C-terminus: GTP cyclohydrolase 1 type 2 homolog (373 aa).

The a divalent metal cation site is built by H68, H69, D107, H333, and E336.

Belongs to the GTP cyclohydrolase I type 2/NIF3 family. Homohexamer.

In Bacillus subtilis (strain 168), this protein is GTP cyclohydrolase 1 type 2 homolog (yqfO).